The primary structure comprises 317 residues: MTSLTNSLNPAQTLAPASNGDVADFFALLKPRVMALVVFTALVGMTVSPSHVNPVIGAVSLLMIAVGAGASGCLNMWWDADIDAVMTRTRSRPIPAGRIRPEEALTFGLVLAVGSVLMLGLAANWLAAGLLAFTIVFYTVIYSMWLKRATAQNIVIGGAAGALPPMIGQAVVTGSVGIEGIILFLIIFIWTPPHFWALALVKSADYAKAGIPMMPNVAGPDSTRRQIVGYTLLLAPLGLAPVALGFGGLIYGLVALLGGLAMLVLSLQVHRRREGESADKAAMSLFGFSILYLFLLFSALLAEQGLGLMRPIPVLLG.

A run of 6 helical transmembrane segments spans residues 25–45 (FFAL…LVGM), 54–74 (PVIG…SGCL), 117–137 (LMLG…TIVF), 167–189 (IGQA…IIFI), 244–264 (LGFG…AMLV), and 281–301 (AAMS…SALL).

It belongs to the UbiA prenyltransferase family. Protoheme IX farnesyltransferase subfamily.

Its subcellular location is the cell inner membrane. The enzyme catalyses heme b + (2E,6E)-farnesyl diphosphate + H2O = Fe(II)-heme o + diphosphate. Its pathway is porphyrin-containing compound metabolism; heme O biosynthesis; heme O from protoheme: step 1/1. Functionally, converts heme B (protoheme IX) to heme O by substitution of the vinyl group on carbon 2 of heme B porphyrin ring with a hydroxyethyl farnesyl side group. The polypeptide is Protoheme IX farnesyltransferase (Methylobacterium nodulans (strain LMG 21967 / CNCM I-2342 / ORS 2060)).